The sequence spans 478 residues: Sodium-coupled neutral amino acid transporter 5 (478 aa).

Positions 1 to 20 (MAISSAEGMELQDPKMNGAL) are disordered. Topologically, residues 1-57 (MAISSAEGMELQDPKMNGALPGNAVEQEHEGFLPSHSPSPGRKPAQFMDFEGKTSFG) are cytoplasmic. The helical transmembrane segment at 58-80 (MSVFNLSNAIMGSGILGLAYAMA) threads the bilayer. Over 81–93 (HTGILLFLALLLC) the chain is Extracellular. Residues 94–114 (IALLSSYSIHLLLTCAGVVGI) traverse the membrane as a helical segment. Over 115 to 131 (RAYEQLGQRALGPAGKV) the chain is Cytoplasmic. A helical membrane pass occupies residues 132 to 152 (VVAAVICLHNVGAMSSYLFII). At 153-172 (KSELPLVIATFLDMDPEGDW) the chain is on the extracellular side. Residues 173-193 (FLKGNLLIIIVSVLIILPLAL) form a helical membrane-spanning segment. Residues 194–198 (MRHLG) lie on the Cytoplasmic side of the membrane. A helical membrane pass occupies residues 199-219 (YLGYTSGLSLTCMLFFLISVI). Residues 220–263 (YKKFQLGCTVGHNGTAVESKSSPSLPIHGLNTSCEAQMFTADSQ) lie on the Extracellular side of the membrane. Cys-227 and Cys-253 are disulfide-bonded. N-linked (GlcNAc...) asparagine glycosylation is present at Asn-232. Residues 264-284 (MFYTVPIMAFAFVCHPEVLPI) traverse the membrane as a helical segment. Topologically, residues 285 to 301 (YTELCRPSKRRMQAVAN) are cytoplasmic. A helical membrane pass occupies residues 302–322 (VSIGAMFCMYGLTATFGYLTF). The Extracellular segment spans residues 323–340 (YSSVEAEMLHMYSQHDLL). A helical transmembrane segment spans residues 341-361 (ILCVRLAVLLAVTLTVPVVLF). The Cytoplasmic segment spans residues 362 to 382 (PIRRALQQLLFPSKAFSWPRH). Residues 383–403 (VAIALILLVLVNVLVICVPTI) form a helical membrane-spanning segment. Residues 404–405 (RD) lie on the Extracellular side of the membrane. The chain crosses the membrane as a helical span at residues 406 to 426 (IFGVIGSTSAPSLIFILPSIF). At 427 to 445 (YLRIVPSEVEPLYSWPKIQ) the chain is on the cytoplasmic side. Residues 446–466 (ALCFGVLGVLFMAISLGFMFA) form a helical membrane-spanning segment. Over 467–478 (NWATGQSHVSGH) the chain is Extracellular.

Belongs to the amino acid/polyamine transporter 2 family.

The protein localises to the cell membrane. It catalyses the reaction L-serine(out) + Na(+)(out) + H(+)(in) = L-serine(in) + Na(+)(in) + H(+)(out). The enzyme catalyses L-alanine(out) + Na(+)(out) + H(+)(in) = L-alanine(in) + Na(+)(in) + H(+)(out). The catalysed reaction is glycine(out) + Na(+)(out) + H(+)(in) = glycine(in) + Na(+)(in) + H(+)(out). It carries out the reaction L-glutamine(out) + Na(+)(out) + H(+)(in) = L-glutamine(in) + Na(+)(in) + H(+)(out). It catalyses the reaction L-asparagine(out) + Na(+)(out) + H(+)(in) = L-asparagine(in) + Na(+)(in) + H(+)(out). The enzyme catalyses L-histidine(out) + Na(+)(out) + H(+)(in) = L-histidine(in) + Na(+)(in) + H(+)(out). The catalysed reaction is L-cysteine(out) + Na(+)(out) + H(+)(in) = L-cysteine(in) + Na(+)(in) + H(+)(out). Not inhibited by lithium. Partial allosteric regulation on ions sodium binding. In terms of biological role, symporter that cotransports neutral amino acids and sodium ions, coupled to an H(+) antiporter activity. Releases L-glutamine and glycine from astroglial cells and may participate in the glutamate/GABA-glutamine cycle and the NMDA receptors activation. In addition contributes significantly to L-glutamine uptake in retina, namely in ganglion and Mueller cells and, therefore participates in the retinal glutamate-glutamine cycle. The transport activity is pH sensitive, Li(+) tolerant, bidirectional and associated with large uncoupled fluxes of protons. The transport is electroneutral coupled to the cotransport of 1 Na(+) and the antiport of 1 H(+). May have particular importance for modulation of net hepatic glutamine flux. The sequence is that of Sodium-coupled neutral amino acid transporter 5 from Bos taurus (Bovine).